Reading from the N-terminus, the 240-residue chain is Tetrahydromethanopterin S-methyltransferase subunit A (240 aa).

The Cytoplasmic portion of the chain corresponds to 1-218 (MADKKEPAPG…KFHSGVHAGK (218 aa)). His85 is a 5-hydroxybenzimidazolylcob(I)amide binding site. Residues 219–239 (IEGAMIGLTVTISLLGLLLLG) form a helical membrane-spanning segment. Residue Arg240 is a topological domain, extracellular.

It belongs to the MtrA family. In terms of assembly, the complex is composed of 8 subunits; MtrA, MtrB, MtrC, MtrD, MtrE, MtrF, MtrG and MtrH. 5-hydroxybenzimidazolylcob(I)amide serves as cofactor.

Its subcellular location is the cell membrane. It catalyses the reaction 5-methyl-5,6,7,8-tetrahydromethanopterin + coenzyme M + 2 Na(+)(in) = 5,6,7,8-tetrahydromethanopterin + methyl-coenzyme M + 2 Na(+)(out). It participates in one-carbon metabolism; methanogenesis from CO(2); methyl-coenzyme M from 5,10-methylene-5,6,7,8-tetrahydromethanopterin: step 2/2. Functionally, part of a complex that catalyzes the formation of methyl-coenzyme M and tetrahydromethanopterin from coenzyme M and methyl-tetrahydromethanopterin. This is an energy-conserving, sodium-ion translocating step. The sequence is that of Tetrahydromethanopterin S-methyltransferase subunit A from Methanosarcina barkeri (strain Fusaro / DSM 804).